The following is a 146-amino-acid chain: Protein new-glue 3 (146 aa).

A signal peptide spans 1 to 23 (MRYSCVLLLLATVACLLIPQTGG). Residues 23-146 (GSTATTTSTS…RRARSARRLS (124 aa)) are disordered. The segment covering 24-66 (STATTTSTSASATTTTSASATTTTASDTTTTTAATTTTSSSSS) has biased composition (low complexity). Tandem repeats lie at residues 31 to 38 (TSASATTT), 39 to 46 (TSASATTT), 47 to 53 (TASDTTT), and 54 to 61 (TTAATTTT). The 4 X 8 AA approximate tandem repeats of T-S-A-S-A-T-T-T stretch occupies residues 31-61 (TSASATTTTSASATTTTASDTTTTTAATTTT). The span at 67 to 92 (KSKKKKRTYHYTRHVYRPKRIRHIYR) shows a compositional bias: basic residues. The span at 93 to 106 (HKADDDESSTDRTS) shows a compositional bias: basic and acidic residues. The segment covering 116–132 (SSSSSSSGSTSSRSGNS) has biased composition (low complexity). Over residues 133–146 (RIRRRRARSARRLS) the composition is skewed to basic residues.

Salivary gland specific.

It is found in the secreted. In Drosophila melanogaster (Fruit fly), this protein is Protein new-glue 3 (ng3).